The chain runs to 703 residues: Calpain-8 (703 aa).

Residues L45–S344 form the Calpain catalytic domain. Residues C105, H262, and N286 contribute to the active site. A domain III region spans residues W356–A379. EF-hand domains are found at residues F575–Y610, D618–T640, and I670–V703. 10 residues coordinate Ca(2+): D588, N590, T592, T594, E599, D618, N620, S622, T624, and E629.

This sequence belongs to the peptidase C2 family. As to quaternary structure, monomer and homooligomer. Interacts with COPS1/GPS1, COPB1, EYA2, NME2, NME4 and TOMM70. Ca(2+) is required as a cofactor. Post-translationally, undergoes autolytic cleavage between Ala-5 and Ala-6 which gives rise to fragments extending from Ala-6 to the C-terminus, Ala-6 to the EF-hand 2 domain and from Ala-6 to the beginning of domain III. In terms of tissue distribution, stomach.

It localises to the cytoplasm. Its subcellular location is the golgi apparatus. The catalysed reaction is Broad endopeptidase specificity.. Its function is as follows. Calcium-regulated non-lysosomal thiol-protease. Involved in membrane trafficking in the gastric surface mucus cells (pit cells) and may involve the membrane trafficking of mucus cells via interactions with coat protein. Proteolytically cleaves the beta-subunit of coatomer complex. The polypeptide is Calpain-8 (CAPN8) (Homo sapiens (Human)).